Here is a 56-residue protein sequence, read N- to C-terminus: Large ribosomal subunit protein bL33 (56 aa).

This sequence belongs to the bacterial ribosomal protein bL33 family.

This is Large ribosomal subunit protein bL33 from Actinobacillus succinogenes (strain ATCC 55618 / DSM 22257 / CCUG 43843 / 130Z).